The sequence spans 617 residues: Proline--tRNA ligase (617 aa).

The protein belongs to the class-II aminoacyl-tRNA synthetase family. ProS type 1 subfamily. In terms of assembly, homodimer.

It is found in the cytoplasm. The enzyme catalyses tRNA(Pro) + L-proline + ATP = L-prolyl-tRNA(Pro) + AMP + diphosphate. Functionally, catalyzes the attachment of proline to tRNA(Pro) in a two-step reaction: proline is first activated by ATP to form Pro-AMP and then transferred to the acceptor end of tRNA(Pro). As ProRS can inadvertently accommodate and process non-cognate amino acids such as alanine and cysteine, to avoid such errors it has two additional distinct editing activities against alanine. One activity is designated as 'pretransfer' editing and involves the tRNA(Pro)-independent hydrolysis of activated Ala-AMP. The other activity is designated 'posttransfer' editing and involves deacylation of mischarged Ala-tRNA(Pro). The misacylated Cys-tRNA(Pro) is not edited by ProRS. This Streptococcus agalactiae serotype III (strain NEM316) protein is Proline--tRNA ligase.